The sequence spans 183 residues: ATP-dependent protease subunit HslV (183 aa).

T13 is a catalytic residue. Residues G168, C171, and T174 each contribute to the Na(+) site.

It belongs to the peptidase T1B family. HslV subfamily. In terms of assembly, a double ring-shaped homohexamer of HslV is capped on each side by a ring-shaped HslU homohexamer. The assembly of the HslU/HslV complex is dependent on binding of ATP.

The protein resides in the cytoplasm. It carries out the reaction ATP-dependent cleavage of peptide bonds with broad specificity.. Allosterically activated by HslU binding. In terms of biological role, protease subunit of a proteasome-like degradation complex believed to be a general protein degrading machinery. The polypeptide is ATP-dependent protease subunit HslV (Xanthomonas campestris pv. campestris (strain ATCC 33913 / DSM 3586 / NCPPB 528 / LMG 568 / P 25)).